We begin with the raw amino-acid sequence, 516 residues long: MSERQPIRRALVSVYDKSGLDQLAKALIDAQVEVVSTGSTAKELASHGVTVTEVSEITGFPECLDGRVKTLHPKVHAGILADRRLTSHREQLTALEVKPFDLVVCNLYPFAETVAQGGDFDECIEKIDIGGPSMVRAAAKNHANVAVLTNPDQYEDLARALSEGGYTMEERRVLAARAFAHTAAYDVAVATWFGSRDGVAVDGVPTFVGTTGELSHPLRYGENSHQAAAVYRSSGEPGLAGARQLHGKAMSYNNYVDTNSARRAAFDFEAPCVAVIKHSNPCGIATGSDIAEAHRKAHACDSLSAFGGVIATNRPVSVEMAEQVAEIFTEVVVAPGYEDGAVEILSRKKNIRLLECPAPHLAGWELRQIDGGLLAMETDLFQADGDDPANWTLAAGDPVDDVTLADLSFAWRACRSVRSNAILLAHDGASVGVGMGQVNRVDSCRLAVERAGDRAAGSVAASDAFFPFADGPQVLIDAHIAAIVEPGGSIRDDQTIEVCRTAGVPLYFTGTRHFFH.

The 149-residue stretch at 1–149 (MSERQPIRRA…KNHANVAVLT (149 aa)) folds into the MGS-like domain.

This sequence belongs to the PurH family.

It carries out the reaction (6R)-10-formyltetrahydrofolate + 5-amino-1-(5-phospho-beta-D-ribosyl)imidazole-4-carboxamide = 5-formamido-1-(5-phospho-D-ribosyl)imidazole-4-carboxamide + (6S)-5,6,7,8-tetrahydrofolate. The catalysed reaction is IMP + H2O = 5-formamido-1-(5-phospho-D-ribosyl)imidazole-4-carboxamide. Its pathway is purine metabolism; IMP biosynthesis via de novo pathway; 5-formamido-1-(5-phospho-D-ribosyl)imidazole-4-carboxamide from 5-amino-1-(5-phospho-D-ribosyl)imidazole-4-carboxamide (10-formyl THF route): step 1/1. It functions in the pathway purine metabolism; IMP biosynthesis via de novo pathway; IMP from 5-formamido-1-(5-phospho-D-ribosyl)imidazole-4-carboxamide: step 1/1. This is Bifunctional purine biosynthesis protein PurH from Cutibacterium acnes (strain DSM 16379 / KPA171202) (Propionibacterium acnes).